Consider the following 361-residue polypeptide: MKALILVGGFGTRLRPLTLSFPKPLVDFANKPMILHQIEALKEVGVTEVVLAINYRPEVMLNFLKDFEDKLGITITCSQETEPLGTAGPLALARDKLVDGSGEPFFVLNSDVISEYPFAELIKFHKSHGGEATIMVTKVDEPSKYGVVVMEEVTGMVEKFVEKPKIFVGNKINAGIYLLNPSVLDRIELKPTSIEKEVFPRIASDAKLFALVLPGFWMDVGQPRDYITGLRLYLDSLRKRSTNRLATGAHIVGNVLVHESAKIGEGCLIGPDVAIGPGCVVEDGVRLSRCTVMRGVHIKKHACISNSIIGWHSTVGQWARIENMTILGEDVHVGDEVYTNGGVVLPHKEIKSSILKPEIVM.

GDP-alpha-D-mannose is bound by residues L6 and V7. Diphosphate contacts are provided by G9, G11, T12, R13, and K23. Residues G85, N109, D111, G146, and N173 each coordinate GDP-alpha-D-mannose.

It belongs to the transferase hexapeptide repeat family.

It carries out the reaction alpha-D-mannose 1-phosphate + GTP + H(+) = GDP-alpha-D-mannose + diphosphate. Its pathway is nucleotide-sugar biosynthesis; GDP-alpha-D-mannose biosynthesis; GDP-alpha-D-mannose from alpha-D-mannose 1-phosphate (GTP route): step 1/1. In terms of biological role, catalyzes a reaction of the Smirnoff-Wheeler pathway, the major route to ascorbate biosynthesis in plants. The polypeptide is Probable mannose-1-phosphate guanylyltransferase 2 (Oryza sativa subsp. japonica (Rice)).